Reading from the N-terminus, the 493-residue chain is Sulfoacetaldehyde dehydrogenase (acylating) (493 aa).

A compositionally biased stretch (basic residues) spans 1 to 10; that stretch reads MSVQILHRRQ. Positions 1–21 are disordered; sequence MSVQILHRRQSNNSDLPLPTA. C273 serves as the catalytic Nucleophile.

It belongs to the aldehyde dehydrogenase family. Homodimer.

It localises to the cytoplasm. It carries out the reaction sulfoacetaldehyde + NADP(+) + CoA = sulfoacetyl-CoA + NADPH + H(+). In terms of biological role, involved in the degradation of sulfoacetate, a widespread natural product. Catalyzes the conversion of sulfoacetyl-CoA and NADPH to sulfoacetaldehyde, CoA and NADP(+). Specific for NADP(+) and sulfoacetaldehyde. The chain is Sulfoacetaldehyde dehydrogenase (acylating) from Cupriavidus necator (strain ATCC 17699 / DSM 428 / KCTC 22496 / NCIMB 10442 / H16 / Stanier 337) (Ralstonia eutropha).